Here is a 428-residue protein sequence, read N- to C-terminus: C4-dicarboxylate transport protein (428 aa).

Transmembrane regions (helical) follow at residues 4–24 (SLFKSLYFQVLTAIAIGILLG), 44–64 (LIKMVIAPVIFCTVVTGIAGM), 76–96 (VALLYFEIVSTIALIIGLIIV), 142–162 (IGAFASGNILQVLLFAVMFGF), 184–204 (VIFGIINMIMRLAPIGAFGAM), 222–242 (LIVCFYITCILFVVVVLGSIA), 289–309 (VVGLVIPTGYSFNLDGTSIYL), 326–346 (IFHQVTLLVVLLLSSKGAAGV), and 352–372 (IVLAATISAVGHLPVAGLALI).

Belongs to the dicarboxylate/amino acid:cation symporter (DAACS) (TC 2.A.23) family.

It localises to the cell inner membrane. Responsible for the transport of dicarboxylates such as succinate, fumarate, and malate from the periplasm across the membrane. The protein is C4-dicarboxylate transport protein of Citrobacter koseri (strain ATCC BAA-895 / CDC 4225-83 / SGSC4696).